A 357-amino-acid polypeptide reads, in one-letter code: AA9 family lytic polysaccharide monooxygenase B (357 aa).

An N-terminal signal peptide occupies residues 1–18; the sequence is MKFSSVLALAASAKLVAS. Cu(2+) is bound by residues histidine 19 and histidine 101. Positions 19 to 234 are catalytic; that stretch reads HATVFAVWIN…IPGPAVWDGA (216 aa). The cysteines at positions 61 and 182 are disulfide-linked. 2 residues coordinate O2: histidine 168 and glutamine 177. Tyrosine 179 is a Cu(2+) binding site. The interval 235–318 is ser/Thr-rich linker; that stretch reads SSGSGSSGSG…SAAPTGGTGT (84 aa). A disordered region spans residues 292 to 317; it reads SVRPTTSAAPTTSAPTSSAAPTGGTG. Positions 295–313 are enriched in low complexity; sequence PTTSAAPTTSAPTSSAAPT. The CBM1 domain maps to 319-355; that stretch reads GSIQIYQQCGGMNYKGATGCASGLTCKQWNPYYHQCV.

The protein belongs to the polysaccharide monooxygenase AA9 family. Requires Cu(2+) as cofactor.

The protein resides in the secreted. The enzyme catalyses [(1-&gt;4)-beta-D-glucosyl]n+m + reduced acceptor + O2 = 4-dehydro-beta-D-glucosyl-[(1-&gt;4)-beta-D-glucosyl]n-1 + [(1-&gt;4)-beta-D-glucosyl]m + acceptor + H2O.. In terms of biological role, lytic polysaccharide monooxygenase (LPMO) that depolymerizes crystalline and amorphous polysaccharides via the oxidation of scissile alpha- or beta-(1-4)-glycosidic bonds, yielding C4 oxidation products. Catalysis by LPMOs requires the reduction of the active-site copper from Cu(II) to Cu(I) by a reducing agent and H(2)O(2) or O(2) as a cosubstrate. Active on carboxymethylcellulose (CMC), hydroxyethylcellulose (HEC) and beta-glucan. Also active on soluble cellohexaose, a property that is restricted to only a few characterized LPMOs. The sequence is that of AA9 family lytic polysaccharide monooxygenase B from Emericella nidulans (strain FGSC A4 / ATCC 38163 / CBS 112.46 / NRRL 194 / M139) (Aspergillus nidulans).